Consider the following 261-residue polypeptide: Indole-3-glycerol phosphate synthase (261 aa).

The protein belongs to the TrpC family.

The catalysed reaction is 1-(2-carboxyphenylamino)-1-deoxy-D-ribulose 5-phosphate + H(+) = (1S,2R)-1-C-(indol-3-yl)glycerol 3-phosphate + CO2 + H2O. Its pathway is amino-acid biosynthesis; L-tryptophan biosynthesis; L-tryptophan from chorismate: step 4/5. The protein is Indole-3-glycerol phosphate synthase of Burkholderia pseudomallei (strain 668).